Consider the following 472-residue polypeptide: Methanethiol oxidase (472 aa).

It belongs to the selenium-binding protein family.

The protein resides in the nucleus. It is found in the cytoplasm. The protein localises to the cytosol. Its subcellular location is the membrane. It carries out the reaction methanethiol + O2 + H2O = hydrogen sulfide + formaldehyde + H2O2 + H(+). Its pathway is organosulfur degradation. In terms of biological role, catalyzes the oxidation of methanethiol, an organosulfur compound known to be produced in substantial amounts by gut bacteria. Selenium-binding protein which may be involved in the sensing of reactive xenobiotics in the cytoplasm. May be involved in intra-Golgi protein transport. The polypeptide is Methanethiol oxidase (selenbp1) (Xenopus tropicalis (Western clawed frog)).